The primary structure comprises 253 residues: 5'/3'-nucleotidase SurE (253 aa).

A divalent metal cation-binding residues include aspartate 8, aspartate 9, serine 39, and asparagine 92.

Belongs to the SurE nucleotidase family. A divalent metal cation serves as cofactor.

It localises to the cytoplasm. It catalyses the reaction a ribonucleoside 5'-phosphate + H2O = a ribonucleoside + phosphate. The enzyme catalyses a ribonucleoside 3'-phosphate + H2O = a ribonucleoside + phosphate. It carries out the reaction [phosphate](n) + H2O = [phosphate](n-1) + phosphate + H(+). Functionally, nucleotidase with a broad substrate specificity as it can dephosphorylate various ribo- and deoxyribonucleoside 5'-monophosphates and ribonucleoside 3'-monophosphates with highest affinity to 3'-AMP. Also hydrolyzes polyphosphate (exopolyphosphatase activity) with the preference for short-chain-length substrates (P20-25). Might be involved in the regulation of dNTP and NTP pools, and in the turnover of 3'-mononucleotides produced by numerous intracellular RNases (T1, T2, and F) during the degradation of various RNAs. This is 5'/3'-nucleotidase SurE from Enterobacter sp. (strain 638).